Reading from the N-terminus, the 386-residue chain is Probable protein phosphatase 2C 36 (386 aa).

Positions Glu60–Ile363 constitute a PPM-type phosphatase domain. 4 residues coordinate Mn(2+): Asp94, Gly95, Asp295, and Asp354.

Belongs to the PP2C family. Mg(2+) is required as a cofactor. It depends on Mn(2+) as a cofactor.

It catalyses the reaction O-phospho-L-seryl-[protein] + H2O = L-seryl-[protein] + phosphate. The catalysed reaction is O-phospho-L-threonyl-[protein] + H2O = L-threonyl-[protein] + phosphate. This Oryza sativa subsp. japonica (Rice) protein is Probable protein phosphatase 2C 36.